Reading from the N-terminus, the 96-residue chain is Co-chaperonin GroES (96 aa).

Belongs to the GroES chaperonin family. Heptamer of 7 subunits arranged in a ring. Interacts with the chaperonin GroEL.

It localises to the cytoplasm. Its function is as follows. Together with the chaperonin GroEL, plays an essential role in assisting protein folding. The GroEL-GroES system forms a nano-cage that allows encapsulation of the non-native substrate proteins and provides a physical environment optimized to promote and accelerate protein folding. GroES binds to the apical surface of the GroEL ring, thereby capping the opening of the GroEL channel. In Hydrogenovibrio crunogenus (strain DSM 25203 / XCL-2) (Thiomicrospira crunogena), this protein is Co-chaperonin GroES.